Here is a 153-residue protein sequence, read N- to C-terminus: Endoribonuclease YbeY (153 aa).

Residues His118, His122, and His128 each contribute to the Zn(2+) site.

It belongs to the endoribonuclease YbeY family. It depends on Zn(2+) as a cofactor.

The protein localises to the cytoplasm. Single strand-specific metallo-endoribonuclease involved in late-stage 70S ribosome quality control and in maturation of the 3' terminus of the 16S rRNA. The polypeptide is Endoribonuclease YbeY (Chloroflexus aggregans (strain MD-66 / DSM 9485)).